The sequence spans 998 residues: Bifunctional glutamine synthetase adenylyltransferase/adenylyl-removing enzyme (998 aa).

The interval 1–487 is adenylyl removase; that stretch reads MVVTKPATQR…LHAKLFYQPL (487 aa). The tract at residues 492 to 998 is adenylyl transferase; the sequence is GPAGLEIRHG…KAVVRKVFGS (507 aa).

The protein belongs to the GlnE family. Requires Mg(2+) as cofactor.

It catalyses the reaction [glutamine synthetase]-O(4)-(5'-adenylyl)-L-tyrosine + phosphate = [glutamine synthetase]-L-tyrosine + ADP. The catalysed reaction is [glutamine synthetase]-L-tyrosine + ATP = [glutamine synthetase]-O(4)-(5'-adenylyl)-L-tyrosine + diphosphate. Functionally, involved in the regulation of glutamine synthetase GlnA, a key enzyme in the process to assimilate ammonia. When cellular nitrogen levels are high, the C-terminal adenylyl transferase (AT) inactivates GlnA by covalent transfer of an adenylyl group from ATP to specific tyrosine residue of GlnA, thus reducing its activity. Conversely, when nitrogen levels are low, the N-terminal adenylyl removase (AR) activates GlnA by removing the adenylyl group by phosphorolysis, increasing its activity. The regulatory region of GlnE binds the signal transduction protein PII (GlnB) which indicates the nitrogen status of the cell. In Mycobacterium avium (strain 104), this protein is Bifunctional glutamine synthetase adenylyltransferase/adenylyl-removing enzyme.